Reading from the N-terminus, the 328-residue chain is Cytochrome c biogenesis protein CcsA (328 aa).

The next 8 membrane-spanning stretches (helical) occupy residues 13 to 33, 46 to 66, 73 to 93, 101 to 121, 146 to 166, 234 to 254, 263 to 283, and 295 to 315; these read ISFS…LVNL, GIII…IYSG, LYES…VSYF, LNAI…SGLL, MILG…LLVI, IISL…VWAN, WDPK…YLHI, and AIVA…VILL.

This sequence belongs to the CcmF/CycK/Ccl1/NrfE/CcsA family. May interact with Ccs1.

It localises to the plastid. Its subcellular location is the chloroplast thylakoid membrane. Its function is as follows. Required during biogenesis of c-type cytochromes (cytochrome c6 and cytochrome f) at the step of heme attachment. The sequence is that of Cytochrome c biogenesis protein CcsA from Crucihimalaya wallichii (Rock-cress).